The sequence spans 31 residues: Photosystem II reaction center protein T (31 aa).

Residues 3–23 (ALVYTFLLVGTLGIIFFAIFF) form a helical membrane-spanning segment.

The protein belongs to the PsbT family. In terms of assembly, PSII is composed of 1 copy each of membrane proteins PsbA, PsbB, PsbC, PsbD, PsbE, PsbF, PsbH, PsbI, PsbJ, PsbK, PsbL, PsbM, PsbT, PsbY, PsbZ, Psb30/Ycf12, at least 3 peripheral proteins of the oxygen-evolving complex and a large number of cofactors. It forms dimeric complexes.

It localises to the plastid. It is found in the chloroplast thylakoid membrane. In terms of biological role, found at the monomer-monomer interface of the photosystem II (PS II) dimer, plays a role in assembly and dimerization of PSII. PSII is a light-driven water plastoquinone oxidoreductase, using light energy to abstract electrons from H(2)O, generating a proton gradient subsequently used for ATP formation. This Mesostigma viride (Green alga) protein is Photosystem II reaction center protein T.